Here is a 184-residue protein sequence, read N- to C-terminus: ATP synthase subunit delta (184 aa).

Belongs to the ATPase delta chain family. In terms of assembly, F-type ATPases have 2 components, F(1) - the catalytic core - and F(0) - the membrane proton channel. F(1) has five subunits: alpha(3), beta(3), gamma(1), delta(1), epsilon(1). F(0) has three main subunits: a(1), b(2) and c(10-14). The alpha and beta chains form an alternating ring which encloses part of the gamma chain. F(1) is attached to F(0) by a central stalk formed by the gamma and epsilon chains, while a peripheral stalk is formed by the delta and b chains.

It is found in the cell membrane. F(1)F(0) ATP synthase produces ATP from ADP in the presence of a proton or sodium gradient. F-type ATPases consist of two structural domains, F(1) containing the extramembraneous catalytic core and F(0) containing the membrane proton channel, linked together by a central stalk and a peripheral stalk. During catalysis, ATP synthesis in the catalytic domain of F(1) is coupled via a rotary mechanism of the central stalk subunits to proton translocation. In terms of biological role, this protein is part of the stalk that links CF(0) to CF(1). It either transmits conformational changes from CF(0) to CF(1) or is implicated in proton conduction. This Rickettsia africae (strain ESF-5) protein is ATP synthase subunit delta.